A 258-amino-acid chain; its full sequence is Transcription cofactor vestigial-like protein 1 (258 aa).

Polar residues-rich tracts occupy residues 55–65 and 74–87; these read PQELTPSSQSE and SMSP…SPWT. Positions 55–93 are disordered; sequence PQELTPSSQSEGVMLKNDDSMSPNQWRYSSPWTKPQPEV.

This sequence belongs to the vestigial family. Interacts with TEFs.

The protein resides in the nucleus. May act as a specific coactivator for the mammalian TEFs. The sequence is that of Transcription cofactor vestigial-like protein 1 (VGLL1) from Homo sapiens (Human).